Here is a 355-residue protein sequence, read N- to C-terminus: Chorismate synthase (355 aa).

Residue Arg-46 participates in NADP(+) binding. Residues 123–125 (RAS), 233–234 (NG), Gly-273, 288–292 (KPTPS), and Arg-314 contribute to the FMN site.

This sequence belongs to the chorismate synthase family. As to quaternary structure, homotetramer. It depends on FMNH2 as a cofactor.

It catalyses the reaction 5-O-(1-carboxyvinyl)-3-phosphoshikimate = chorismate + phosphate. It functions in the pathway metabolic intermediate biosynthesis; chorismate biosynthesis; chorismate from D-erythrose 4-phosphate and phosphoenolpyruvate: step 7/7. Its function is as follows. Catalyzes the anti-1,4-elimination of the C-3 phosphate and the C-6 proR hydrogen from 5-enolpyruvylshikimate-3-phosphate (EPSP) to yield chorismate, which is the branch point compound that serves as the starting substrate for the three terminal pathways of aromatic amino acid biosynthesis. This reaction introduces a second double bond into the aromatic ring system. The sequence is that of Chorismate synthase from Campylobacter concisus (strain 13826).